We begin with the raw amino-acid sequence, 189 residues long: ATP-dependent protease subunit HslV (189 aa).

Residue Thr12 is part of the active site. The Na(+) site is built by Ser172, Cys175, and Thr178.

This sequence belongs to the peptidase T1B family. HslV subfamily. As to quaternary structure, a double ring-shaped homohexamer of HslV is capped on each side by a ring-shaped HslU homohexamer. The assembly of the HslU/HslV complex is dependent on binding of ATP.

It is found in the cytoplasm. The catalysed reaction is ATP-dependent cleavage of peptide bonds with broad specificity.. Allosterically activated by HslU binding. In terms of biological role, protease subunit of a proteasome-like degradation complex believed to be a general protein degrading machinery. The chain is ATP-dependent protease subunit HslV from Ehrlichia chaffeensis (strain ATCC CRL-10679 / Arkansas).